A 297-amino-acid chain; its full sequence is Transcription factor PCF8 (297 aa).

A disordered region spans residues 1 to 22 (MEEVVGGGKERKRPRGALVGVG). Positions 46–104 (GKDRHSKVVTSRGLRDRRVRLSVPTAIAFYDIQDRLGVDQPSKAIEWLIRAAAAAIDAL) constitute a TCP domain. 2 disordered regions span residues 116–136 (AASSPPPPAADDAEVSTSETS) and 273–297 (AAPAATTNGGERRLQLWDFKEERKT). A compositionally biased stretch (basic and acidic residues) spans 282–297 (GERRLQLWDFKEERKT).

In terms of assembly, forms homodimers and heterodimers.

The protein resides in the nucleus. Transcription activator. Binds the promoter core sequence 5'-GGNCC-3'. The protein is Transcription factor PCF8 (PCF8) of Oryza sativa subsp. indica (Rice).